Here is a 129-residue protein sequence, read N- to C-terminus: Small ribosomal subunit protein uS11 (129 aa).

The protein belongs to the universal ribosomal protein uS11 family. As to quaternary structure, part of the 30S ribosomal subunit. Interacts with proteins S7 and S18. Binds to IF-3.

Functionally, located on the platform of the 30S subunit, it bridges several disparate RNA helices of the 16S rRNA. Forms part of the Shine-Dalgarno cleft in the 70S ribosome. The chain is Small ribosomal subunit protein uS11 from Psychromonas ingrahamii (strain DSM 17664 / CCUG 51855 / 37).